A 302-amino-acid polypeptide reads, in one-letter code: Epoxyqueuosine reductase (302 aa).

D128 acts as the Proton donor in catalysis. Positions 170 to 202 (LPLQADGPIRDYCGTCTACIDACPTDAITPYEV) constitute a 4Fe-4S ferredoxin-type 1 domain. Residues C182, C185, C188, C192, C207, C234, C237, and C241 each coordinate [4Fe-4S] cluster. One can recognise a 4Fe-4S ferredoxin-type 2 domain in the interval 221-251 (NEFKGKMENWIFGCDICQDVCPWNSFARPHS).

The protein belongs to the QueG family. Monomer. Cob(II)alamin serves as cofactor. [4Fe-4S] cluster is required as a cofactor.

It is found in the cytoplasm. The catalysed reaction is epoxyqueuosine(34) in tRNA + AH2 = queuosine(34) in tRNA + A + H2O. Its pathway is tRNA modification; tRNA-queuosine biosynthesis. Its function is as follows. Catalyzes the conversion of epoxyqueuosine (oQ) to queuosine (Q), which is a hypermodified base found in the wobble positions of tRNA(Asp), tRNA(Asn), tRNA(His) and tRNA(Tyr). The chain is Epoxyqueuosine reductase from Leadbetterella byssophila (strain DSM 17132 / JCM 16389 / KACC 11308 / NBRC 106382 / 4M15).